The following is a 313-amino-acid chain: D-apiose import binding protein (313 aa).

The first 26 residues, 1–26, serve as a signal peptide directing secretion; the sequence is MKLTRRLTLAAFASVLALGTAAPAFS. D-apiofuranose contacts are provided by residues Asn39, 115-116, 162-164, Arg168, Asn218, Asp243, and Gln263; these read DR and DTN.

The protein belongs to the bacterial solute-binding protein 2 family.

It is found in the periplasm. Functionally, part of an ABC transporter complex involved in D-apiose import. The protein is D-apiose import binding protein of Rhizobium rhizogenes (strain K84 / ATCC BAA-868) (Agrobacterium radiobacter).